Here is a 968-residue protein sequence, read N- to C-terminus: RNA polymerase-associated protein RapA (968 aa).

Residues 164–334 form the Helicase ATP-binding domain; the sequence is DVGRRHAPRV…FARLRLLDPN (171 aa). 177 to 184 contacts ATP; the sequence is DEVGLGKT. Positions 280 to 283 match the DEAH box motif; that stretch reads DEAH. Residues 490-662 form the Helicase C-terminal domain; the sequence is RVEWLMGYLT…YLASPDQTEG (173 aa).

Belongs to the SNF2/RAD54 helicase family. RapA subfamily. In terms of assembly, interacts with the RNAP. Has a higher affinity for the core RNAP than for the holoenzyme. Its ATPase activity is stimulated by binding to RNAP.

In terms of biological role, transcription regulator that activates transcription by stimulating RNA polymerase (RNAP) recycling in case of stress conditions such as supercoiled DNA or high salt concentrations. Probably acts by releasing the RNAP, when it is trapped or immobilized on tightly supercoiled DNA. Does not activate transcription on linear DNA. Probably not involved in DNA repair. The polypeptide is RNA polymerase-associated protein RapA (Shigella boydii serotype 4 (strain Sb227)).